A 477-amino-acid chain; its full sequence is Ribulose bisphosphate carboxylase large chain (477 aa).

The propeptide occupies 1-2; sequence MS. Pro3 is subject to N-acetylproline. Position 14 is an N6,N6,N6-trimethyllysine (Lys14). The substrate site is built by Asn123 and Thr173. Lys175 acts as the Proton acceptor in catalysis. Residue Lys177 participates in substrate binding. Positions 201, 203, and 204 each coordinate Mg(2+). Lys201 carries the post-translational modification N6-carboxylysine. His294 (proton acceptor) is an active-site residue. Substrate-binding residues include Arg295, His327, and Ser379.

This sequence belongs to the RuBisCO large chain family. Type I subfamily. Heterohexadecamer of 8 large chains and 8 small chains; disulfide-linked. The disulfide link is formed within the large subunit homodimers. Mg(2+) is required as a cofactor. In terms of processing, the disulfide bond which can form in the large chain dimeric partners within the hexadecamer appears to be associated with oxidative stress and protein turnover.

The protein resides in the plastid. It localises to the chloroplast. The catalysed reaction is 2 (2R)-3-phosphoglycerate + 2 H(+) = D-ribulose 1,5-bisphosphate + CO2 + H2O. The enzyme catalyses D-ribulose 1,5-bisphosphate + O2 = 2-phosphoglycolate + (2R)-3-phosphoglycerate + 2 H(+). In terms of biological role, ruBisCO catalyzes two reactions: the carboxylation of D-ribulose 1,5-bisphosphate, the primary event in carbon dioxide fixation, as well as the oxidative fragmentation of the pentose substrate in the photorespiration process. Both reactions occur simultaneously and in competition at the same active site. The sequence is that of Ribulose bisphosphate carboxylase large chain from Dioscorea elephantipes (Elephant's foot yam).